Consider the following 427-residue polypeptide: Inward rectifier potassium channel 2 (427 aa).

Residues 1–81 (MGSVRTNRYS…IFTTCVDIRW (81 aa)) lie on the Cytoplasmic side of the membrane. A helical membrane pass occupies residues 82-106 (RWMLVIFCLTFILSWLFFGCVFWLI). The Extracellular segment spans residues 107-128 (ALLHGDLENQENNKPCVSQVSS). Residues 129–140 (FTAAFLFSIETQ) constitute an intramembrane region (helical; Pore-forming). Positions 141–147 (TTIGYGF) form an intramembrane region, pore-forming. The Selectivity filter signature appears at 142–147 (TIGYGF). At 148–156 (RCVTDECPI) the chain is on the extracellular side. The chain crosses the membrane as a helical span at residues 157–178 (AVFMVVFQSIVGCIIDAFIIGA). Over 179-427 (VMAKMAKPKK…PRPLRRESEI (249 aa)) the chain is Cytoplasmic. The interval 181–208 (AKMAKPKKRNETLVFSHNAVVAMRDGKL) is polyphosphoinositide (PIP2)-binding. Residues 386–427 (EEDEIDTGVPESTSTDTHPDMDHHNQAGVPLEPRPLRRESEI) are disordered. A PDZ-binding motif is present at residues 425–427 (SEI).

Belongs to the inward rectifier-type potassium channel (TC 1.A.2.1) family. KCNJ2 subfamily. In terms of assembly, homotetramer. Homomultimeric and heteromultimeric association with KCNJ4/Kir2.3, resulting in an enhanced G-protein-induced current. Associates, via its PDZ-recognition domain, with a complex containing LIN7A, LIN7B, LIN7C, DLG1, CASK and APBA1. In terms of tissue distribution, found in the apical basilar papilla of the inner ear, brain, muscle, cerebellum, heart and liver.

Its subcellular location is the cell membrane. The protein localises to the sarcolemma. It localises to the T-tubule. The catalysed reaction is K(+)(in) = K(+)(out). Activated by phosphatidylinositol 4,5 biphosphate (PtdIns(4,5)P2). Inward rectifier potassium channels are characterized by a greater tendency to allow potassium to flow into the cell rather than out of it. Their voltage dependence is regulated by the concentration of extracellular potassium; as external potassium is raised, the voltage range of the channel opening shifts to more positive voltages. The inward rectification is mainly due to the blockage of outward current by internal magnesium. Can be blocked by external barium. Probably participates in establishing action potential waveform and excitability of neuronal and muscle tissues. The chain is Inward rectifier potassium channel 2 (KCNJ2) from Gallus gallus (Chicken).